We begin with the raw amino-acid sequence, 403 residues long: MTESTFSQYPRLVLSKGREKSLLRRHPWVFSGAVSRLEGKANLGETIDIVDHQGKWLARGAWSPASQIRARVWTFDKAESIDIAFFTRRLRQAQQWRDWLAKKDGLDSYRLIAGESDGLPGVTIDRFGHFLVLQLLSAGAEYQRAALISALQTCYPDCAIYDRSDVAVRKKEGMALTQGPVTGELPPALLPIEEHGMKLLVDIQGGHKTGYYLDQRDSRLATRRYVENQRVLNCFSYTGGFAVSALMGGCRQVVSVDTSQDALDIARQNVELNQLDLSKAEFVRDDVFKLLRAYREHGEKFDVIIMDPPKFVENKSQLMGACRGYKDINMLAIQLLNPGGILLTFSCSGLMTSDLFQKIIADAAIDAGRDVQFIEQFRQAADHPVIATYPEGLYLKGFACRVM.

In terms of domain architecture, PUA spans 9-88; it reads YPRLVLSKGR…ESIDIAFFTR (80 aa).

It belongs to the methyltransferase superfamily. RlmI family.

The protein resides in the cytoplasm. The catalysed reaction is cytidine(1962) in 23S rRNA + S-adenosyl-L-methionine = 5-methylcytidine(1962) in 23S rRNA + S-adenosyl-L-homocysteine + H(+). Its function is as follows. Specifically methylates the cytosine at position 1962 (m5C1962) of 23S rRNA. The protein is Ribosomal RNA large subunit methyltransferase I of Salmonella schwarzengrund (strain CVM19633).